The sequence spans 876 residues: MSKSTAEIRQAFLDFFHSKGHQVVASSSLVPHNDPTLLFTNAGMNQFKDVFLGLDKRNYSRATTSQRCVRAGGKHNDLENVGYTARHHTFFEMLGNFSFGDYFKHDAIQFAWELLTSEKWFALPKERLWVTVYESDDEAYEIWEKEVGIPRERIIRIGDNKGAPYASDNFWQMGDTGPCGPCTEIFYDHGDHIWGGPPGSPEEDGDRYIEIWNIVFMQFNRQADGTMEPLPKPSVDTGMGLERIAAVLQHVNSNYDIDLFRTLIQAVAKVTGATDLSNKSLRVIADHIRSCAFLIADGVMPSNENRGYVLRRIIRRAVRHGNMLGAKETFFYKLVGPLIDVMGSAGEDLKRQQAQVEQVLKTEEEQFARTLERGLALLDEELAKLSGDTLDGETAFRLYDTYGFPVDLTADVCRERNIKVDEAGFEAAMEEQRRRAREASGFGADYNAMIRVDSASEFKGYDHLELNGKVTALFVDGKAVDAINAGQEAVVVLDQTPFYAESGGQVGDKGELKDANFSFAVEDTQKYGQAIGHIGKLAAGSLKVGDAVQADVDEARRARIRLNHSATHLMHAALRQVLGTHVSQKGSLVNDKVLRFDFSHNEAMKPEEIRAVEDLVNAQIRRNLPIETNIMDLEAAKAKGAMALFGEKYDERVRVLSMGDFSTELCGGTHASRTGDIGLFRIISESGTAAGVRRIEAVTGEGAITTVHADSDRLSEVAHLLKGDSNNLADKVRSVLERTRQLEKELQQLKEQAAAQESANLSSKAIDVNGVKLLVSELSGVEPKMLRTMVDDLKNQLGSTIIVLATVAEGKVSLIAGVSKDVTDRVKAGELIGMVAQQVGGKGGGRPDMAQAGGTDAAALPAALASVKGWVSAKLQ.

K74 carries the post-translational modification N6-acetyllysine. Zn(2+)-binding residues include H564, H568, C666, and H670.

Belongs to the class-II aminoacyl-tRNA synthetase family. In terms of assembly, homotetramer. Requires Zn(2+) as cofactor.

It localises to the cytoplasm. The catalysed reaction is tRNA(Ala) + L-alanine + ATP = L-alanyl-tRNA(Ala) + AMP + diphosphate. In terms of biological role, catalyzes the attachment of alanine to tRNA(Ala) in a two-step reaction: alanine is first activated by ATP to form Ala-AMP and then transferred to the acceptor end of tRNA(Ala). Also edits incorrectly charged Ser-tRNA(Ala) and Gly-tRNA(Ala) via its editing domain. The sequence is that of Alanine--tRNA ligase from Shigella boydii serotype 4 (strain Sb227).